The sequence spans 147 residues: Nucleoside diphosphate kinase (147 aa).

ATP-binding residues include Lys-9, Phe-57, Arg-85, Thr-91, Arg-102, and Asn-112. His-115 acts as the Pros-phosphohistidine intermediate in catalysis.

This sequence belongs to the NDK family. Homotetramer. It depends on Mg(2+) as a cofactor.

It is found in the cytoplasm. The enzyme catalyses a 2'-deoxyribonucleoside 5'-diphosphate + ATP = a 2'-deoxyribonucleoside 5'-triphosphate + ADP. It catalyses the reaction a ribonucleoside 5'-diphosphate + ATP = a ribonucleoside 5'-triphosphate + ADP. Functionally, major role in the synthesis of nucleoside triphosphates other than ATP. The ATP gamma phosphate is transferred to the NDP beta phosphate via a ping-pong mechanism, using a phosphorylated active-site intermediate. This is Nucleoside diphosphate kinase from Listeria welshimeri serovar 6b (strain ATCC 35897 / DSM 20650 / CCUG 15529 / CIP 8149 / NCTC 11857 / SLCC 5334 / V8).